We begin with the raw amino-acid sequence, 134 residues long: Ribonuclease P protein component (134 aa).

It belongs to the RnpA family. As to quaternary structure, consists of a catalytic RNA component (M1 or rnpB) and a protein subunit.

It carries out the reaction Endonucleolytic cleavage of RNA, removing 5'-extranucleotides from tRNA precursor.. RNaseP catalyzes the removal of the 5'-leader sequence from pre-tRNA to produce the mature 5'-terminus. It can also cleave other RNA substrates such as 4.5S RNA. The protein component plays an auxiliary but essential role in vivo by binding to the 5'-leader sequence and broadening the substrate specificity of the ribozyme. The polypeptide is Ribonuclease P protein component (Ectopseudomonas mendocina (strain ymp) (Pseudomonas mendocina)).